We begin with the raw amino-acid sequence, 216 residues long: MPIGVPKVPYRIPGDEEATWVDLYNVMYRERTLFLGQEIRCEITNHITGLMVYLSIEDGNSDIFLFINSLGGWLISGMAIFDTMQTVTPDIYTICLGIAASMASFILLGGEPTKRIAFPHARIMLHQPASAYYRARTPEFLLEVEELHKVREMITRVYALRTGKPFWVVSEDMERDVFMSADEAKAYGLVDIVGDEMIDEHCDTDPVWFPEMFKDW.

Ser101 functions as the Nucleophile in the catalytic mechanism. His126 is an active-site residue.

The protein belongs to the peptidase S14 family. In terms of assembly, component of the chloroplastic Clp protease core complex.

It localises to the plastid. The protein resides in the chloroplast stroma. The enzyme catalyses Hydrolysis of proteins to small peptides in the presence of ATP and magnesium. alpha-casein is the usual test substrate. In the absence of ATP, only oligopeptides shorter than five residues are hydrolyzed (such as succinyl-Leu-Tyr-|-NHMec, and Leu-Tyr-Leu-|-Tyr-Trp, in which cleavage of the -Tyr-|-Leu- and -Tyr-|-Trp bonds also occurs).. Its function is as follows. Cleaves peptides in various proteins in a process that requires ATP hydrolysis. Has a chymotrypsin-like activity. Plays a major role in the degradation of misfolded proteins. In Zea mays (Maize), this protein is ATP-dependent Clp protease proteolytic subunit.